Reading from the N-terminus, the 503-residue chain is ATP synthase subunit alpha (503 aa).

170–177 (GDKQTGKT) contributes to the ATP binding site.

Belongs to the ATPase alpha/beta chains family. In terms of assembly, F-type ATPases have 2 components, CF(1) - the catalytic core - and CF(0) - the membrane proton channel. CF(1) has five subunits: alpha(3), beta(3), gamma(1), delta(1), epsilon(1). CF(0) has three main subunits: a(1), b(2) and c(9-12). The alpha and beta chains form an alternating ring which encloses part of the gamma chain. CF(1) is attached to CF(0) by a central stalk formed by the gamma and epsilon chains, while a peripheral stalk is formed by the delta and b chains.

It is found in the cell inner membrane. It carries out the reaction ATP + H2O + 4 H(+)(in) = ADP + phosphate + 5 H(+)(out). Produces ATP from ADP in the presence of a proton gradient across the membrane. The alpha chain is a regulatory subunit. The sequence is that of ATP synthase subunit alpha from Helicobacter pylori (strain HPAG1).